Reading from the N-terminus, the 131-residue chain is Phosphoribosyl-AMP cyclohydrolase (131 aa).

Asp74 is a Mg(2+) binding site. Cys75 is a Zn(2+) binding site. Residues Asp76 and Asp78 each contribute to the Mg(2+) site. Residues Cys91 and Cys98 each contribute to the Zn(2+) site.

This sequence belongs to the PRA-CH family. Homodimer. Mg(2+) is required as a cofactor. It depends on Zn(2+) as a cofactor.

The protein localises to the cytoplasm. The enzyme catalyses 1-(5-phospho-beta-D-ribosyl)-5'-AMP + H2O = 1-(5-phospho-beta-D-ribosyl)-5-[(5-phospho-beta-D-ribosylamino)methylideneamino]imidazole-4-carboxamide. Its pathway is amino-acid biosynthesis; L-histidine biosynthesis; L-histidine from 5-phospho-alpha-D-ribose 1-diphosphate: step 3/9. Catalyzes the hydrolysis of the adenine ring of phosphoribosyl-AMP. The protein is Phosphoribosyl-AMP cyclohydrolase of Bradyrhizobium sp. (strain BTAi1 / ATCC BAA-1182).